Here is a 206-residue protein sequence, read N- to C-terminus: GTP-binding protein YPTC5 (206 aa).

Position 15–22 (15–22 (GDSGVGKT)) interacts with GTP. The Effector region signature appears at 37 to 45 (YKATIGADF). Residues 63–67 (DTAGQ) and 125–128 (NKID) contribute to the GTP site. Residues Cys205 and Cys206 are each lipidated (S-geranylgeranyl cysteine).

This sequence belongs to the small GTPase superfamily. Rab family.

The protein localises to the cell membrane. Its function is as follows. Protein transport. Probably involved in vesicular traffic. The protein is GTP-binding protein YPTC5 (YPTC5) of Chlamydomonas reinhardtii (Chlamydomonas smithii).